The sequence spans 255 residues: Phosphate import ATP-binding protein PstB (255 aa).

An ABC transporter domain is found at 9-250 (MYAQGLQFYY…PRNKQTEDYI (242 aa)). 41–48 (GPSGCGKS) is an ATP binding site.

It belongs to the ABC transporter superfamily. Phosphate importer (TC 3.A.1.7) family. As to quaternary structure, the complex is composed of two ATP-binding proteins (PstB), two transmembrane proteins (PstC and PstA) and a solute-binding protein (PstS).

It localises to the cell inner membrane. It carries out the reaction phosphate(out) + ATP + H2O = ADP + 2 phosphate(in) + H(+). In terms of biological role, part of the ABC transporter complex PstSACB involved in phosphate import. Responsible for energy coupling to the transport system. The chain is Phosphate import ATP-binding protein PstB from Nitratidesulfovibrio vulgaris (strain ATCC 29579 / DSM 644 / CCUG 34227 / NCIMB 8303 / VKM B-1760 / Hildenborough) (Desulfovibrio vulgaris).